We begin with the raw amino-acid sequence, 308 residues long: GTP cyclohydrolase MptA (308 aa).

Positions 282 to 308 (NDESIHQHNAHAEREVTLGQLRDELDA) are disordered.

It belongs to the GTP cyclohydrolase IV family. Homodimer. Fe(2+) is required as a cofactor.

It carries out the reaction GTP + H2O = 7,8-dihydroneopterin 2',3'-cyclic phosphate + formate + diphosphate + H(+). It functions in the pathway cofactor biosynthesis; 5,6,7,8-tetrahydromethanopterin biosynthesis. Functionally, converts GTP to 7,8-dihydro-D-neopterin 2',3'-cyclic phosphate, the first intermediate in the biosynthesis of coenzyme methanopterin. Involved in archaeosine (G(+)) and folate biosynthesis. The polypeptide is GTP cyclohydrolase MptA (Haloferax volcanii (strain ATCC 29605 / DSM 3757 / JCM 8879 / NBRC 14742 / NCIMB 2012 / VKM B-1768 / DS2) (Halobacterium volcanii)).